A 3390-amino-acid polypeptide reads, in one-letter code: Polyprotein-FSD (3390 aa).

In terms of domain architecture, SF3 helicase spans 369–543 (TVKRRNEILT…ELGPFNYKNP (175 aa)). ATP is bound at residue 396 to 403 (GPGGIGKT). Residues 1206–1423 (KPYFQIAEEK…MSALIYKEDL (218 aa)) enclose the Peptidase C3 domain. Active-site for 3C-like protease activity residues include His1258, Glu1295, and Cys1381. Residues 1914-2042 (KNFFSCDYKN…AVDDSIADIF (129 aa)) form the RdRp catalytic domain. Met2346 carries the N-acetylmethionine; by host modification. 2 disordered regions span residues 2576–2609 (YNDL…GVDE) and 3168–3190 (TPSE…KSIA). Acidic residues predominate over residues 2587–2609 (PDPDPEPDPDPEPGPDPEPGVDE).

N-acetylated. Post-translationally, proteolytic cleavages of the polyprotein yield mature proteins.

It is found in the virion. It carries out the reaction RNA(n) + a ribonucleoside 5'-triphosphate = RNA(n+1) + diphosphate. The catalysed reaction is ATP + H2O = ADP + phosphate + H(+). Its function is as follows. Assembles with VP1 and VP2 to form an icosahedral capsid. VP1 is about 5 time more abundant than VP1-FSD in the virion. Assembles with VP1 and VP1-FSD to form an icosahedral capsid. Functionally, replicates genomic and antigenomic RNA. The chain is Polyprotein-FSD from Solenopsis invicta (Red imported fire ant).